Reading from the N-terminus, the 410-residue chain is Sensor-like histidine kinase SenX3 (410 aa).

2 helical membrane-spanning segments follow: residues 6-26 and 46-66; these read ALLL…AVGM and ITVS…AAVV. Residues 164–380 form the Histidine kinase domain; that stretch reads NVSHELKTPV…TFTLALPALI (217 aa). The residue at position 167 (H167) is a Phosphohistidine; by autocatalysis. The tract at residues 385-410 is disordered; sequence DDERPEQAREPELRSNRSQREEELSR.

In terms of processing, autophosphorylated.

Its subcellular location is the cell membrane. The enzyme catalyses ATP + protein L-histidine = ADP + protein N-phospho-L-histidine.. In terms of biological role, member of the two-component regulatory system SenX3/RegX3. Autophosphorylates, and then transfers the phosphate group to RegX3. This Mycobacterium bovis (strain ATCC BAA-935 / AF2122/97) protein is Sensor-like histidine kinase SenX3.